The sequence spans 145 residues: tRNA-specific adenosine deaminase (145 aa).

In terms of domain architecture, CMP/dCMP-type deaminase spans 1–116; it reads MREALKQAEI…SNLRYFNSKA (116 aa). A Zn(2+)-binding site is contributed by H48. The active-site Proton donor is E50. C78 and C81 together coordinate Zn(2+).

This sequence belongs to the cytidine and deoxycytidylate deaminase family. In terms of assembly, homodimer. Zn(2+) serves as cofactor.

The enzyme catalyses adenosine(34) in tRNA + H2O + H(+) = inosine(34) in tRNA + NH4(+). Its function is as follows. Catalyzes the deamination of adenosine to inosine at the wobble position 34 of tRNA(Arg2). This is tRNA-specific adenosine deaminase from Rickettsia bellii (strain RML369-C).